A 61-amino-acid chain; its full sequence is Large ribosomal subunit protein uL30 (61 aa).

This sequence belongs to the universal ribosomal protein uL30 family. In terms of assembly, part of the 50S ribosomal subunit.

The polypeptide is Large ribosomal subunit protein uL30 (Corynebacterium jeikeium (strain K411)).